A 428-amino-acid chain; its full sequence is MEKSMASSNLIKQLQERGLVAQVTDEEALAQRLAQGPIALYCGFDPTADSLHLGHLVPLLCLKRFQMAGHKPVALVGGATGLIGDPSFKATERKLNTEDTVQEWVDKIRRQVAPFLDFDCGENSAIAANNYDWFGNMNVLTFLRDIGKHFSVNQMINKEAVKQRLNRDDVGISFTEFSYNLLQGYDFACLNKLHGVALQIGGSDQWGNITSGIDLTRRLHQNQVFGLTVPLITKSDGTKFGKTEGGAVWLDPKKTSPYKFYQFWINTADADVYRFLKFFTFMSIDEINALEEEDKNSGKAPRAQYVLAEQVTRLVHGEEGLAAAKRITESLFNGNLNALSEADFEQLAQNGVPMIEMEKGADLMQALVDSELQPSRGQARKTIASNAITINGEKQSDPEYTFSDSDRLFGRYTLLRRGKKNYCLVCWK.

Residue tyrosine 41 participates in L-tyrosine binding. A 'HIGH' region motif is present at residues proline 46–histidine 55. The L-tyrosine site is built by tyrosine 179 and glutamine 183. The 'KMSKS' region motif lies at lysine 239–threonine 243. An ATP-binding site is contributed by lysine 242. The 58-residue stretch at alanine 361–glycine 418 folds into the S4 RNA-binding domain.

This sequence belongs to the class-I aminoacyl-tRNA synthetase family. TyrS type 1 subfamily. Homodimer.

It is found in the cytoplasm. It carries out the reaction tRNA(Tyr) + L-tyrosine + ATP = L-tyrosyl-tRNA(Tyr) + AMP + diphosphate + H(+). Functionally, catalyzes the attachment of tyrosine to tRNA(Tyr) in a two-step reaction: tyrosine is first activated by ATP to form Tyr-AMP and then transferred to the acceptor end of tRNA(Tyr). This Cronobacter sakazakii (strain ATCC BAA-894) (Enterobacter sakazakii) protein is Tyrosine--tRNA ligase.